The following is a 148-amino-acid chain: Probable glycine cleavage system H protein 2 (148 aa).

Positions 32-114 (TIVVGITDLA…YGKGWLVKMK (83 aa)) constitute a Lipoyl-binding domain. At lysine 73 the chain carries N6-lipoyllysine.

Belongs to the GcvH family. As to quaternary structure, the glycine cleavage system is composed of four proteins: P, T, L and H. (R)-lipoate is required as a cofactor.

The glycine cleavage system catalyzes the degradation of glycine. The H protein shuttles the methylamine group of glycine from the P protein to the T protein. This Saccharolobus solfataricus (strain ATCC 35092 / DSM 1617 / JCM 11322 / P2) (Sulfolobus solfataricus) protein is Probable glycine cleavage system H protein 2.